The primary structure comprises 200 residues: MLKYPDYLSKLISLLRKLPGIGFKTAEKLAFELLDWDKDQLESMGKAFSELSAARSHCPTCFCLKSHPESVCSFCQNNRDTSILCIVATPKDIFSLERSQIFQGHYYVLGALLSPITGRHIDAERMHLLKQRIEFLKPKEIILALDATLEGDATALFLKQELSHSSASVSRLALGLPIGLSFDYIDSGTLARAFSGRNPY.

The C4-type zinc finger occupies 58–75 (CPTCFCLKSHPESVCSFC). The region spanning 82–177 (SILCIVATPK…SVSRLALGLP (96 aa)) is the Toprim domain.

Belongs to the RecR family.

Functionally, may play a role in DNA repair. It seems to be involved in an RecBC-independent recombinational process of DNA repair. It may act with RecF and RecO. The sequence is that of Recombination protein RecR from Chlamydia abortus (strain DSM 27085 / S26/3) (Chlamydophila abortus).